The primary structure comprises 30 residues: GIPCGESCVWIPCLTSAVGCSCKSKVCYRN.

A cross-link (cyclopeptide (Gly-Asn)) is located at residues 1–30 (GIPCGESCVWIPCLTSAVGCSCKSKVCYRN). 3 disulfides stabilise this stretch: cysteine 4/cysteine 20, cysteine 8/cysteine 22, and cysteine 13/cysteine 27.

In terms of processing, this is a cyclic peptide.

Its function is as follows. Probably participates in a plant defense mechanism. The protein is Cycloviolacin-O9 of Viola odorata (Sweet violet).